A 152-amino-acid polypeptide reads, in one-letter code: Protein FERTILITY RESTORER RF2, mitochondrial (152 aa).

The transit peptide at 1-52 (MSTLVTCSLPGAVTTHASTRRFGGSQFQTSQASCISFKREVSAKAVLRSVRC) directs the protein to the mitochondrion. Over residues 52–69 (CNATQTQSAQRKSSTATV) the composition is skewed to polar residues. The segment at 52 to 101 (CNATQTQSAQRKSSTATVKRSDPKGKTQGPKLDDGSGGFPPFRFGKGGGG) is disordered.

It localises to the mitochondrion. In terms of biological role, non-functional allele of the RF2 fertility restorer of rice varieties with LD-type cytoplasmic male sterility (CMS). Non-functional RF2 alleles are found in japonica cultivars Taichung 65 and Nipponbare (AC F1SZ44), and is due to the presence of Thr-78 which replaces Ile-78 in the functional allele. Functional allele is found in the japonica cultivars Fukuyama and Owarihatamochi (AC F1SZ42), and indica cultivar Kasalath (AC F1SZ41). This Oryza sativa subsp. japonica (Rice) protein is Protein FERTILITY RESTORER RF2, mitochondrial.